The following is a 326-amino-acid chain: Septum site-determining protein minD homolog, chloroplastic (326 aa).

Residues 1–62 (MASLRLFSTN…LAGETPRIVV (62 aa)) constitute a chloroplast transit peptide. 67–74 (KGGVGKTT) is a binding site for ATP.

The protein belongs to the ParA family. MinD subfamily. As to quaternary structure, homodimer. Interacts with MINE1. Binds to ARC3. Interacts with MCD1. Interacts with CDP1/PARC6.

The protein resides in the plastid. It localises to the chloroplast inner membrane. Stimulated ATPase activity by MINE1. In terms of biological role, together with ARC3 and MCD1, regulates FtsZ ring positioning in chloroplasts in an ARC6-dependent manner. Calcium-dependent ATPase required for the correct placement of the plastid division site. Inhibits FtsZ filament and ring formation in the plastid. Mediates inhibition of plastid division. In cooperation with MINE1, prevents FtsZ ring formation anywhere outside of the mid-plastids. In Arabidopsis thaliana (Mouse-ear cress), this protein is Septum site-determining protein minD homolog, chloroplastic.